We begin with the raw amino-acid sequence, 277 residues long: Thiazole synthase (277 aa).

The Schiff-base intermediate with DXP role is filled by lysine 118. 1-deoxy-D-xylulose 5-phosphate is bound by residues glycine 179, 205–206 (AG), and 227–228 (NT).

This sequence belongs to the ThiG family. In terms of assembly, homotetramer. Forms heterodimers with either ThiH or ThiS.

It is found in the plastid. It localises to the chloroplast. It catalyses the reaction [ThiS sulfur-carrier protein]-C-terminal-Gly-aminoethanethioate + 2-iminoacetate + 1-deoxy-D-xylulose 5-phosphate = [ThiS sulfur-carrier protein]-C-terminal Gly-Gly + 2-[(2R,5Z)-2-carboxy-4-methylthiazol-5(2H)-ylidene]ethyl phosphate + 2 H2O + H(+). Its pathway is cofactor biosynthesis; thiamine diphosphate biosynthesis. Catalyzes the rearrangement of 1-deoxy-D-xylulose 5-phosphate (DXP) to produce the thiazole phosphate moiety of thiamine. Sulfur is provided by the thiocarboxylate moiety of the carrier protein ThiS. In vitro, sulfur can be provided by H(2)S. This is Thiazole synthase from Emiliania huxleyi (Coccolithophore).